The chain runs to 196 residues: Transmembrane 4 L6 family member 5 (196 aa).

At Met-1–Phe-9 the chain is on the cytoplasmic side. Residues Val-10–Val-30 traverse the membrane as a helical segment. The Extracellular segment spans residues Pro-31 to Gln-45. A helical transmembrane segment spans residues Val-46–Ala-66. Topologically, residues Val-67–Ser-89 are cytoplasmic. The chain crosses the membrane as a helical span at residues Val-90 to Gly-110. The interaction with MTOR and CASTOR1 stretch occupies residues Val-90–Gln-196. Topologically, residues Leu-111–Thr-156 are extracellular. A glycan (N-linked (GlcNAc...) asparagine) is linked at Asn-120. Trp-123–Gln-128 serves as a coordination point for L-arginine. Asn-137 and Asn-154 each carry an N-linked (GlcNAc...) asparagine glycan. Residues Leu-157–Val-177 traverse the membrane as a helical segment. The Cytoplasmic segment spans residues Asn-178–Gln-196.

It belongs to the L6 tetraspanin family. As to quaternary structure, interacts with MTOR; the interaction is positively regulated by arginine and is negatively regulated by leucine. Interacts with SLC38A9. Interacts with SLC7A1; the interaction is negatively regulated by arginine. Interacts with CASTOR1; the interaction is positively regulated by leucine and is negatively regulated by arginine.

The protein localises to the lysosome membrane. Its subcellular location is the cell membrane. In terms of biological role, acts as a lysosomal membrane arginine sensor. Forms a complex with MTOR and SLC38A9 on lysosomal membranes in an arginine-regulated manner, leading to arginine efflux which enables the activation of mTORC1 which subsequently leads to RPS6KB1 and EIF4EBP1 phosphorylations. Facilitates cell cycle G1/S phase progression and the translocation of the CDK4-CCND1 complex into the nucleus. CDKN1B and RHOA/ROCK signaling activity are involved in TM4SF5-mediated acceleration of G1/S phase progression. This Bos taurus (Bovine) protein is Transmembrane 4 L6 family member 5 (TM4SF5).